We begin with the raw amino-acid sequence, 455 residues long: Ornithine decarboxylase (455 aa).

At lysine 67 the chain carries N6-(pyridoxal phosphate)lysine. Pyridoxal 5'-phosphate is bound by residues serine 197, glycine 234, and 271 to 274; that span reads EPGR. Serine 297 bears the Phosphoserine; by CK2 mark. 325 to 326 contributes to the substrate binding site; sequence YD. Cysteine 354 functions as the Proton donor; shared with dimeric partner in the catalytic mechanism. The residue at position 354 (cysteine 354) is an S-nitrosocysteine. Aspartate 355 is a substrate binding site. Tyrosine 383 is a binding site for pyridoxal 5'-phosphate.

It belongs to the Orn/Lys/Arg decarboxylase class-II family. Homodimer. Only the dimer is catalytically active, as the active sites are constructed of residues from both monomers. Requires pyridoxal 5'-phosphate as cofactor.

The enzyme catalyses L-ornithine + H(+) = putrescine + CO2. It functions in the pathway amine and polyamine biosynthesis; putrescine biosynthesis via L-ornithine pathway; putrescine from L-ornithine: step 1/1. Inhibited by antizymes (AZs) OAZ1, OAZ2 and OAZ3 in response to polyamine levels. AZs inhibit the assembly of the functional homodimer by binding to ODC monomers. Additionally, OAZ1 targets ODC monomers for ubiquitin-independent proteolytic destruction by the 26S proteasome. In terms of biological role, catalyzes the first and rate-limiting step of polyamine biosynthesis that converts ornithine into putrescine, which is the precursor for the polyamines, spermidine and spermine. Polyamines are essential for cell proliferation and are implicated in cellular processes, ranging from DNA replication to apoptosis. The protein is Ornithine decarboxylase (ODC1) of Cricetulus griseus (Chinese hamster).